Reading from the N-terminus, the 47-residue chain is Gas vesicle protein A (47 aa).

This sequence belongs to the gas vesicle GvpA family. In terms of assembly, the gas vesicle shell is 2 nm thick and consists of a single layer of this protein. It forms helical ribs nearly perpendicular to the long axis of the vesicle.

The protein localises to the gas vesicle shell. Functionally, gas vesicles are hollow, gas filled proteinaceous nanostructures found in some microorganisms. During planktonic growth they allow positioning of the organism at a favorable depth for light or nutrient acquisition. GvpA forms the protein shell. This chain is Gas vesicle protein A, found in Dactylococcopsis salina (Myxobaktron salinum).